The sequence spans 271 residues: MSKRLLLFDFDETYFKHNTNEEDLSHLREMEKLLEKLTNNNEVITAVLTGSTFQSVMDKMDQVNMTFKPLHIFSDLSSKMFTWNNGEYVESETYKKKVLSEPFLFEDIEDILRHISAQYNVEFIPQRAFEGNETHYNFYFHSTGNHNNDSRILEALVRYANDQNYTARFSRSNPLAGDPENAYDIDFTPSNAGKLYATQFLMKKYNIPVKSILGFGDSGNDEAYLSYLEHAYLMSNSRDEALKQKFRLTKYPYYQGITLHVKEFVEGKYDY.

Belongs to the HAD-like hydrolase superfamily.

This is an uncharacterized protein from Staphylococcus aureus (strain Mu50 / ATCC 700699).